The sequence spans 126 residues: Small ribosomal subunit protein uS12m (126 aa).

Residues 1 to 11 (MATSNQMGANT) are compositionally biased toward polar residues. The segment at 1 to 21 (MATSNQMGANTRSKKKKKNLK) is disordered. A compositionally biased stretch (basic residues) spans 12–21 (RSKKKKKNLK).

Belongs to the universal ribosomal protein uS12 family.

It is found in the mitochondrion. In terms of biological role, protein S12 is involved in the translation initiation step. The chain is Small ribosomal subunit protein uS12m (RPS12) from Bigelowiella natans (Pedinomonas minutissima).